The primary structure comprises 122 residues: Large ribosomal subunit protein uL14c (122 aa).

This sequence belongs to the universal ribosomal protein uL14 family. As to quaternary structure, part of the 50S ribosomal subunit.

The protein resides in the plastid. The protein localises to the chloroplast. In terms of biological role, binds to 23S rRNA. This is Large ribosomal subunit protein uL14c from Mesostigma viride (Green alga).